A 415-amino-acid chain; its full sequence is Phosphoglycerate kinase (415 aa).

(2R)-3-phosphoglycerate-binding residues include Val-22, Asp-23, Phe-24, Asn-25, Gln-37, Arg-38, Ser-61, His-62, Gly-64, Arg-65, Arg-121, His-168, and Arg-169. ADP is bound at residue Gly-212. Residue Gly-212 participates in CDP binding. Ala-213 and Lys-214 together coordinate AMP. Ala-213 contacts ATP. Ala-213 serves as a coordination point for Mg(2+). Mg(2+) is bound by residues Ala-216 and Asp-217. Asp-217 contacts CDP. Lys-218 contacts AMP. Lys-218 is a binding site for ATP. Gly-236 is a binding site for ADP. Residue Gly-236 coordinates CDP. Residues Gly-237 and Gly-311 each contribute to the AMP site. ATP is bound by residues Gly-237 and Gly-311. CDP contacts are provided by Gly-336 and Phe-341. Phe-341 serves as a coordination point for ADP. Glu-342 is an AMP binding site. The ATP site is built by Glu-342, Asp-373, and Thr-374. Residue Asp-373 coordinates Mg(2+).

Belongs to the phosphoglycerate kinase family. In terms of assembly, monomer. Mg(2+) serves as cofactor.

The protein localises to the cytoplasm. The enzyme catalyses (2R)-3-phosphoglycerate + ATP = (2R)-3-phospho-glyceroyl phosphate + ADP. It functions in the pathway carbohydrate degradation; glycolysis; pyruvate from D-glyceraldehyde 3-phosphate: step 2/5. Functionally, enzyme of the glycolytic pathway. Glycolysis is essential in glial cells but not in neurons; neurons rely on the citric acid cycle for their energy needs, and on lactate and alanine secreted into the hemolymph by glial cells to fuel it. In Drosophila melanogaster (Fruit fly), this protein is Phosphoglycerate kinase.